The primary structure comprises 483 residues: Trehalose-6-phosphate synthase (483 aa).

R22 contributes to the D-glucose 6-phosphate binding site. 42–43 (GG) serves as a coordination point for UDP-alpha-D-glucose. D-glucose 6-phosphate-binding residues include Y94 and D148. UDP-alpha-D-glucose contacts are provided by R290 and K295. R328 contributes to the D-glucose 6-phosphate binding site. 393–397 (LVAKE) contributes to the UDP-alpha-D-glucose binding site.

It belongs to the glycosyltransferase 20 family. In terms of assembly, homotetramer.

The enzyme catalyses ADP-alpha-D-glucose + D-glucose 6-phosphate = alpha,alpha-trehalose 6-phosphate + ADP + H(+). It catalyses the reaction CDP-alpha-D-glucose + D-glucose 6-phosphate = alpha,alpha-trehalose 6-phosphate + CDP + H(+). The catalysed reaction is GDP-alpha-D-glucose + D-glucose 6-phosphate = alpha,alpha-trehalose 6-phosphate + GDP + H(+). It carries out the reaction TDP-alpha-D-glucose + D-glucose 6-phosphate = 5-methyl-UDP + alpha,alpha-trehalose 6-phosphate + H(+). The enzyme catalyses D-glucose 6-phosphate + UDP-alpha-D-glucose = alpha,alpha-trehalose 6-phosphate + UDP + H(+). Its pathway is glycan biosynthesis; trehalose biosynthesis. Functionally, probably involved in the osmoprotection via the biosynthesis of trehalose and in the production of glycogen and alpha-glucan via the TreS-Pep2 branch involved in the biosynthesis of maltose-1-phosphate (M1P). Catalyzes the transfer of glucose from UDP-glucose (UDP-Glc) to D-glucose 6-phosphate (Glc-6-P) to form trehalose-6-phosphate. Probably also able to use ADP-Glc, CDP-Glc, GDP-Glc and TDP-Glc as glucosyl donors. In Mycobacterium sp. (strain JLS), this protein is Trehalose-6-phosphate synthase.